Consider the following 704-residue polypeptide: D-(-)-3-hydroxybutyrate oligomer hydrolase (704 aa).

The signal sequence occupies residues 1–31 (MTTTNRNNLKLTALTAAVLTLSACGGSDAVA). The active-site Charge relay system is the Ser309.

This sequence belongs to the D-(-)-3-hydroxybutyrate oligomer hydrolase family.

The protein localises to the secreted. It carries out the reaction (3R)-hydroxybutanoate dimer + H2O = 2 (R)-3-hydroxybutanoate + H(+). Its pathway is lipid metabolism; butanoate metabolism. Participates in the degradation of poly-3-hydroxybutyrate (PHB). It works downstream of poly(3-hydroxybutyrate) depolymerase, hydrolyzing D(-)-3-hydroxybutyrate oligomers of various length (3HB-oligomers) into 3HB-monomers. The sequence is that of D-(-)-3-hydroxybutyrate oligomer hydrolase from Albidiferax ferrireducens (strain ATCC BAA-621 / DSM 15236 / T118) (Rhodoferax ferrireducens).